A 482-amino-acid chain; its full sequence is Ribosomal RNA small subunit methyltransferase F (482 aa).

Residues 119 to 125, Glu-143, Asp-170, and Asp-188 contribute to the S-adenosyl-L-methionine site; that span reads ASAPGSK. The active-site Nucleophile is Cys-241.

It belongs to the class I-like SAM-binding methyltransferase superfamily. RsmB/NOP family.

The protein resides in the cytoplasm. The catalysed reaction is cytidine(1407) in 16S rRNA + S-adenosyl-L-methionine = 5-methylcytidine(1407) in 16S rRNA + S-adenosyl-L-homocysteine + H(+). Functionally, specifically methylates the cytosine at position 1407 (m5C1407) of 16S rRNA. The polypeptide is Ribosomal RNA small subunit methyltransferase F (Shewanella sp. (strain ANA-3)).